The sequence spans 209 residues: Probable nicotinate-nucleotide adenylyltransferase (209 aa).

This sequence belongs to the NadD family.

It catalyses the reaction nicotinate beta-D-ribonucleotide + ATP + H(+) = deamido-NAD(+) + diphosphate. The protein operates within cofactor biosynthesis; NAD(+) biosynthesis; deamido-NAD(+) from nicotinate D-ribonucleotide: step 1/1. In terms of biological role, catalyzes the reversible adenylation of nicotinate mononucleotide (NaMN) to nicotinic acid adenine dinucleotide (NaAD). This chain is Probable nicotinate-nucleotide adenylyltransferase, found in Idiomarina loihiensis (strain ATCC BAA-735 / DSM 15497 / L2-TR).